Here is a 72-residue protein sequence, read N- to C-terminus: Translation initiation factor IF-1 (72 aa).

The S1-like domain maps to 1-72 (MSKDDVIQMQ…SRARIVFRAK (72 aa)).

Belongs to the IF-1 family. Component of the 30S ribosomal translation pre-initiation complex which assembles on the 30S ribosome in the order IF-2 and IF-3, IF-1 and N-formylmethionyl-tRNA(fMet); mRNA recruitment can occur at any time during PIC assembly.

It is found in the cytoplasm. One of the essential components for the initiation of protein synthesis. Stabilizes the binding of IF-2 and IF-3 on the 30S subunit to which N-formylmethionyl-tRNA(fMet) subsequently binds. Helps modulate mRNA selection, yielding the 30S pre-initiation complex (PIC). Upon addition of the 50S ribosomal subunit IF-1, IF-2 and IF-3 are released leaving the mature 70S translation initiation complex. This Methylibium petroleiphilum (strain ATCC BAA-1232 / LMG 22953 / PM1) protein is Translation initiation factor IF-1.